The following is a 230-amino-acid chain: Transcriptional regulatory protein CitT (230 aa).

Positions 6–124 constitute a Response regulatory domain; that stretch reads KVLIIEDDFR…VLHQRLDAYV (119 aa). Asp-59 bears the 4-aspartylphosphate mark. The segment at residues 184–203 is a DNA-binding region (H-T-H motif); sequence AMEGARLIGASRSTVRRYFE.

In terms of processing, phosphorylated by CitS.

The protein localises to the cytoplasm. Functionally, member of the two-component regulatory system CitT/CitS. The protein is Transcriptional regulatory protein CitT (citT) of Halalkalibacterium halodurans (strain ATCC BAA-125 / DSM 18197 / FERM 7344 / JCM 9153 / C-125) (Bacillus halodurans).